The sequence spans 460 residues: Cyclin-A1-1 (460 aa).

Disordered regions lie at residues 1 to 52 and 95 to 126; these read MSNI…ITNQ and PHKV…KSPQ. Composition is skewed to low complexity over residues 10–19 and 100–111; these read SSFSSSTKSS and SSPSKSDDGSVS.

Belongs to the cyclin family. Cyclin AB subfamily. Interacts with FZR2/CCS52A1, FZR1/CCS52A2 and FZR3/CCS52B.

The polypeptide is Cyclin-A1-1 (CYCA1-1) (Arabidopsis thaliana (Mouse-ear cress)).